We begin with the raw amino-acid sequence, 245 residues long: Tetrahydromethanopterin S-methyltransferase subunit A 1 (245 aa).

Over 1-222 the chain is Cytoplasmic; that stretch reads MADKKPAADN…AGNYSGKVQG (222 aa). H84 contributes to the 5-hydroxybenzimidazolylcob(I)amide binding site. Residues 223-243 traverse the membrane as a helical segment; the sequence is IMIGLIFTLVIGFLLLMAPLL. Residues 244 to 245 lie on the Extracellular side of the membrane; it reads GA.

This sequence belongs to the MtrA family. In terms of assembly, the complex is composed of 8 subunits; MtrA, MtrB, MtrC, MtrD, MtrE, MtrF, MtrG and MtrH. The cofactor is 5-hydroxybenzimidazolylcob(I)amide.

Its subcellular location is the cell membrane. It carries out the reaction 5-methyl-5,6,7,8-tetrahydromethanopterin + coenzyme M + 2 Na(+)(in) = 5,6,7,8-tetrahydromethanopterin + methyl-coenzyme M + 2 Na(+)(out). It participates in one-carbon metabolism; methanogenesis from CO(2); methyl-coenzyme M from 5,10-methylene-5,6,7,8-tetrahydromethanopterin: step 2/2. Part of a complex that catalyzes the formation of methyl-coenzyme M and tetrahydromethanopterin from coenzyme M and methyl-tetrahydromethanopterin. This is an energy-conserving, sodium-ion translocating step. This chain is Tetrahydromethanopterin S-methyltransferase subunit A 1, found in Methanobrevibacter ruminantium (strain ATCC 35063 / DSM 1093 / JCM 13430 / OCM 146 / M1) (Methanobacterium ruminantium).